The primary structure comprises 76 residues: Defensin-like protein 125 (76 aa).

The signal sequence occupies residues 1–25; it reads MTKAITLAIFMVVLVLGMVTKETQG. Cystine bridges form between cysteine 30–cysteine 74, cysteine 41–cysteine 60, cysteine 46–cysteine 68, and cysteine 50–cysteine 70.

The protein belongs to the DEFL family.

The protein localises to the secreted. This is Defensin-like protein 125 (LCR54) from Arabidopsis thaliana (Mouse-ear cress).